We begin with the raw amino-acid sequence, 214 residues long: NAD(P)H-quinone oxidoreductase subunit 5, chloroplastic (214 aa).

Helical transmembrane passes span 84 to 104 and 152 to 172; these read LFPLLILLLFTFFIGFIGIPF and SLAILGLFIAYIFYGSAYSFF.

The protein belongs to the complex I subunit 5 family. In terms of assembly, NDH is composed of at least 16 different subunits, 5 of which are encoded in the nucleus.

Its subcellular location is the plastid. The protein localises to the chloroplast thylakoid membrane. The catalysed reaction is a plastoquinone + NADH + (n+1) H(+)(in) = a plastoquinol + NAD(+) + n H(+)(out). It catalyses the reaction a plastoquinone + NADPH + (n+1) H(+)(in) = a plastoquinol + NADP(+) + n H(+)(out). Its function is as follows. NDH shuttles electrons from NAD(P)H:plastoquinone, via FMN and iron-sulfur (Fe-S) centers, to quinones in the photosynthetic chain and possibly in a chloroplast respiratory chain. The immediate electron acceptor for the enzyme in this species is believed to be plastoquinone. Couples the redox reaction to proton translocation, and thus conserves the redox energy in a proton gradient. The chain is NAD(P)H-quinone oxidoreductase subunit 5, chloroplastic (ndhF) from Brachypodium sylvaticum (False brome).